Consider the following 318-residue polypeptide: MAKPGRTPAKGAGTSARILHDGLVIASHGRHCLVETPTGERLICHPRGKKSQAVVGDRVRWQASEDEGTIEEVVPRRNLFYRQDEIRTKSFAANLDHVLILIAAEPEFSEHQLARALIAAEAERITPIIALNKSDLAEPFERAWNKLAPYRRMHHGVLPLSLKASGEADYASLMKLLAGKSTLVLGPSGAGKSTLINLLVPGATALTGEISQALNSGKHTTTSTTWYWVDEARTTSLIDSPGFQEFGLNHIAPMQLAGLMPDIAEHANDCKFYNCTHLHEPGCGVIANVDAPGKPGPISATRYRIYGELFAELSQSRY.

In terms of domain architecture, CP-type G spans 82 to 246 (RQDEIRTKSF…LIDSPGFQEF (165 aa)). Residues 132-135 (NKSD) and 186-194 (GPSGAGKST) contribute to the GTP site. Residues Cys-270, Cys-275, His-277, and Cys-283 each contribute to the Zn(2+) site.

Belongs to the TRAFAC class YlqF/YawG GTPase family. RsgA subfamily. As to quaternary structure, monomer. Associates with 30S ribosomal subunit, binds 16S rRNA. Requires Zn(2+) as cofactor.

Its subcellular location is the cytoplasm. Functionally, one of several proteins that assist in the late maturation steps of the functional core of the 30S ribosomal subunit. Helps release RbfA from mature subunits. May play a role in the assembly of ribosomal proteins into the subunit. Circularly permuted GTPase that catalyzes slow GTP hydrolysis, GTPase activity is stimulated by the 30S ribosomal subunit. This is Small ribosomal subunit biogenesis GTPase RsgA from Variovorax paradoxus (strain S110).